Reading from the N-terminus, the 154-residue chain is Large ribosomal subunit protein uL13 (154 aa).

Belongs to the universal ribosomal protein uL13 family. In terms of assembly, part of the 50S ribosomal subunit.

In terms of biological role, this protein is one of the early assembly proteins of the 50S ribosomal subunit, although it is not seen to bind rRNA by itself. It is important during the early stages of 50S assembly. This is Large ribosomal subunit protein uL13 from Borrelia garinii subsp. bavariensis (strain ATCC BAA-2496 / DSM 23469 / PBi) (Borreliella bavariensis).